The primary structure comprises 485 residues: Two-component response regulator ORR31 (485 aa).

Residues 13–138 form the Response regulatory domain; it reads RVMPVDGDTK…TMAQLWRVVA (126 aa). Aspartate 66 bears the 4-aspartylphosphate mark. Polar residues predominate over residues 195–204; that stretch reads LTINVDSGSS. The interval 195-236 is disordered; the sequence is LTINVDSGSSDGADANPRQKLEHKKDAKGPLGQHVASHLQPQ. Over residues 211-222 the composition is skewed to basic and acidic residues; sequence PRQKLEHKKDAK.

It belongs to the ARR family. Type-B subfamily. Two-component system major event consists of a His-to-Asp phosphorelay between a sensor histidine kinase (HK) and a response regulator (RR). In plants, the His-to-Asp phosphorelay involves an additional intermediate named Histidine-containing phosphotransfer protein (HPt). This multistep phosphorelay consists of a His-Asp-His-Asp sequential transfer of a phosphate group between first a His and an Asp of the HK protein, followed by the transfer to a conserved His of the HPt protein and finally the transfer to an Asp in the receiver domain of the RR protein.

In terms of biological role, functions as a response regulator involved in His-to-Asp phosphorelay signal transduction system. Phosphorylation of the Asp residue in the receiver domain activates the ability of the protein to promote the transcription of target genes. May directly activate some type-A response regulators in response to cytokinins. This is Two-component response regulator ORR31 from Oryza sativa subsp. japonica (Rice).